The primary structure comprises 299 residues: GTPase Era (299 aa).

One can recognise an Era-type G domain in the interval 4-171; that stretch reads KSGFVAILGR…VDILSENLGE (168 aa). Residues 12–19 form a G1 region; the sequence is GRPNVGKS. GTP is bound at residue 12–19; the sequence is GRPNVGKS. A G2 region spans residues 38–42; it reads QTTRN. The tract at residues 59–62 is G3; the sequence is DTPG. Residues 59 to 63 and 121 to 124 contribute to the GTP site; these read DTPGI and NKID. The segment at 121 to 124 is G4; sequence NKID. The interval 150 to 152 is G5; sequence ISA. Residues 202–280 form the KH type-2 domain; it reads TREEIPHSVA…FLETWVKVKK (79 aa).

The protein belongs to the TRAFAC class TrmE-Era-EngA-EngB-Septin-like GTPase superfamily. Era GTPase family. In terms of assembly, monomer.

The protein localises to the cytoplasm. It localises to the cell membrane. In terms of biological role, an essential GTPase that binds both GDP and GTP, with rapid nucleotide exchange. Plays a role in 16S rRNA processing and 30S ribosomal subunit biogenesis and possibly also in cell cycle regulation and energy metabolism. The sequence is that of GTPase Era from Streptococcus pneumoniae (strain JJA).